The chain runs to 246 residues: 1-(5-phosphoribosyl)-5-[(5-phosphoribosylamino)methylideneamino] imidazole-4-carboxamide isomerase (246 aa).

Catalysis depends on aspartate 10, which acts as the Proton acceptor. Aspartate 131 (proton donor) is an active-site residue.

Belongs to the HisA/HisF family.

It is found in the cytoplasm. The catalysed reaction is 1-(5-phospho-beta-D-ribosyl)-5-[(5-phospho-beta-D-ribosylamino)methylideneamino]imidazole-4-carboxamide = 5-[(5-phospho-1-deoxy-D-ribulos-1-ylimino)methylamino]-1-(5-phospho-beta-D-ribosyl)imidazole-4-carboxamide. The protein operates within amino-acid biosynthesis; L-histidine biosynthesis; L-histidine from 5-phospho-alpha-D-ribose 1-diphosphate: step 4/9. This Acidiphilium cryptum (strain JF-5) protein is 1-(5-phosphoribosyl)-5-[(5-phosphoribosylamino)methylideneamino] imidazole-4-carboxamide isomerase.